Reading from the N-terminus, the 314-residue chain is Cytochrome c biogenesis protein CcsA (314 aa).

8 helical membrane-spanning segments follow: residues 15 to 35, 48 to 68, 73 to 93, 102 to 122, 148 to 168, 216 to 236, 250 to 267, and 277 to 297; these read VSFI…ISLI, LITI…WIIS, ISNL…GQLL, IIPA…CFVL, VMLS…VLFI, SILV…IWAN, TWAF…HMRI, and ALLA…VNFL.

This sequence belongs to the CcmF/CycK/Ccl1/NrfE/CcsA family. As to quaternary structure, may interact with ccs1.

The protein resides in the cellular thylakoid membrane. Required during biogenesis of c-type cytochromes (cytochrome c6 and cytochrome f) at the step of heme attachment. In Prochlorococcus marinus subsp. pastoris (strain CCMP1986 / NIES-2087 / MED4), this protein is Cytochrome c biogenesis protein CcsA.